Consider the following 661-residue polypeptide: MNNFSIISEYKPAGDQPKAIDEIIAGLSSKKRSQILLGITGSGKTFTMANIIERTNRPTLIMAHNKTLAAQIYSEMKSIFPKNAVEYFVSYYDYYQPEAYIARTDTFIEKDSSINEQIDLMRHAATRSLLERRDVIVVSSVSCIYGLGSPDLYYQMMVNLEPGQSYPRDQLLNDLINLQYERNDIGFERGCFRVKGDNIDIFPSHYSNKAWRLSFFGNELEYIHEFDPLTGAKLAKLDKAMVFGNSHFVMPQETVNNAISGIEEELQKRLEFLKSQDKPLETQRLNQRTQYDLEMLTETGNCKGVENYSRFFTGRNAGEPPPTLFEYLPEDALLFVDESHVSVPQIRAMYNGDRARKEVLVEHGFRLPSALDNRPLKFEEWEKFRPQTVFVSATPGPFELEETGGTVVELIIRPTGLLDPECIIKPATNQIEDLISEIQTTIAKGFRVLVTTLTKKMAEDLTAYLQELKYKTSYLHSHVHTLERIEILRDLRQGTIDILVGINLLREGLDIPECGLVAILDADKEGFLRSEVSLIQTIGRAARNSEGRVILYADKMTKSIDKAVSETLRRRQIQQEYNAKHGIIPKTINRTIHALAEFEKIDSKLDKKQAHTLFDNPAKLKTHIDKLKKEMLKAASNLEFEQAAKLRDQLKTLEEAALELS.

In terms of domain architecture, Helicase ATP-binding spans 25–182 (AGLSSKKRSQ…NDLINLQYER (158 aa)). An ATP-binding site is contributed by 38-45 (GITGSGKT). A Beta-hairpin motif is present at residues 91 to 114 (YYDYYQPEAYIARTDTFIEKDSSI). The region spanning 430 to 592 (QIEDLISEIQ…IIPKTINRTI (163 aa)) is the Helicase C-terminal domain. One can recognise a UVR domain in the interval 621 to 656 (KTHIDKLKKEMLKAASNLEFEQAAKLRDQLKTLEEA).

It belongs to the UvrB family. Forms a heterotetramer with UvrA during the search for lesions. Interacts with UvrC in an incision complex.

It localises to the cytoplasm. Functionally, the UvrABC repair system catalyzes the recognition and processing of DNA lesions. A damage recognition complex composed of 2 UvrA and 2 UvrB subunits scans DNA for abnormalities. Upon binding of the UvrA(2)B(2) complex to a putative damaged site, the DNA wraps around one UvrB monomer. DNA wrap is dependent on ATP binding by UvrB and probably causes local melting of the DNA helix, facilitating insertion of UvrB beta-hairpin between the DNA strands. Then UvrB probes one DNA strand for the presence of a lesion. If a lesion is found the UvrA subunits dissociate and the UvrB-DNA preincision complex is formed. This complex is subsequently bound by UvrC and the second UvrB is released. If no lesion is found, the DNA wraps around the other UvrB subunit that will check the other stand for damage. In Rickettsia massiliae (strain Mtu5), this protein is UvrABC system protein B.